An 898-amino-acid chain; its full sequence is Vacuolar membrane protease (898 aa).

At methionine 1–arginine 14 the chain is on the cytoplasmic side. Residues threonine 15–isoleucine 35 form a helical membrane-spanning segment. Over threonine 36–proline 342 the chain is Vacuolar. 3 N-linked (GlcNAc...) asparagine glycosylation sites follow: asparagine 50, asparagine 103, and asparagine 110. The Zn(2+) site is built by histidine 139 and aspartate 151. Residue glutamate 183 is the Proton acceptor of the active site. Glutamate 184 provides a ligand contact to Zn(2+). The N-linked (GlcNAc...) asparagine glycan is linked to asparagine 200. Glutamate 209 and histidine 284 together coordinate Zn(2+). The helical transmembrane segment at leucine 343–valine 365 threads the bilayer. The Cytoplasmic segment spans residues threonine 366–phenylalanine 411. The helical transmembrane segment at tryptophan 412–isoleucine 432 threads the bilayer. Residue asparagine 433 is a topological domain, vacuolar. Residues proline 434–leucine 454 traverse the membrane as a helical segment. The Cytoplasmic portion of the chain corresponds to serine 455–glutamine 479. Residues alanine 480 to glycine 500 traverse the membrane as a helical segment. Residues alanine 501–tyrosine 509 are Vacuolar-facing. A helical membrane pass occupies residues isoleucine 510–leucine 530. Over leucine 531–serine 593 the chain is Cytoplasmic. A helical membrane pass occupies residues glycine 594–valine 614. Topologically, residues serine 615 to alanine 635 are vacuolar. A helical membrane pass occupies residues valine 636 to phenylalanine 656. The Cytoplasmic segment spans residues alanine 657–valine 664. Residues alanine 665 to phenylalanine 685 form a helical membrane-spanning segment. The Vacuolar portion of the chain corresponds to serine 686 to valine 898. Residues asparagine 704, asparagine 733, and asparagine 764 are each glycosylated (N-linked (GlcNAc...) asparagine).

Belongs to the peptidase M28 family. Zn(2+) is required as a cofactor.

It localises to the vacuole membrane. Functionally, may be involved in vacuolar sorting and osmoregulation. The chain is Vacuolar membrane protease from Schizophyllum commune (strain H4-8 / FGSC 9210) (Split gill fungus).